The following is a 172-amino-acid chain: SsrA-binding protein (172 aa).

The protein belongs to the SmpB family.

It localises to the cytoplasm. Its function is as follows. Required for rescue of stalled ribosomes mediated by trans-translation. Binds to transfer-messenger RNA (tmRNA), required for stable association of tmRNA with ribosomes. tmRNA and SmpB together mimic tRNA shape, replacing the anticodon stem-loop with SmpB. tmRNA is encoded by the ssrA gene; the 2 termini fold to resemble tRNA(Ala) and it encodes a 'tag peptide', a short internal open reading frame. During trans-translation Ala-aminoacylated tmRNA acts like a tRNA, entering the A-site of stalled ribosomes, displacing the stalled mRNA. The ribosome then switches to translate the ORF on the tmRNA; the nascent peptide is terminated with the 'tag peptide' encoded by the tmRNA and targeted for degradation. The ribosome is freed to recommence translation, which seems to be the essential function of trans-translation. In Dehalococcoides mccartyi (strain ATCC BAA-2266 / KCTC 15142 / 195) (Dehalococcoides ethenogenes (strain 195)), this protein is SsrA-binding protein.